Reading from the N-terminus, the 351-residue chain is Tryptophan--tRNA ligase 2 (351 aa).

The interval 1–24 (MPFVDLEVPTMTTPTPAATPARPR) is disordered. A compositionally biased stretch (low complexity) spans 9-24 (PTMTTPTPAATPARPR). The 'HIGH' region motif lies at 31–39 (PTGALHLGH). Positions 215–219 (KMSKS) match the 'KMSKS' region motif. Lys218 is a binding site for ATP.

It belongs to the class-I aminoacyl-tRNA synthetase family. Homodimer. Forms a complex with nos; one homodimer of trpS2 binds one homodimer of nos.

The enzyme catalyses tRNA(Trp) + L-tryptophan + ATP = L-tryptophyl-tRNA(Trp) + AMP + diphosphate + H(+). Catalyzes the formation of 5'adenyl-Trp and tRNA(Trp) but with 5-fold less activity than TrpRS. Increases the solubility of the nitric oxide synthase oxygenase (nos), as well as its affinity for substrate L-arginine and its nitric-oxide synthase activity. The complex between trpS2 and nos catalyzes the regioselective nitration of tryptophan at the 4-position. The chain is Tryptophan--tRNA ligase 2 (trpS2) from Deinococcus radiodurans (strain ATCC 13939 / DSM 20539 / JCM 16871 / CCUG 27074 / LMG 4051 / NBRC 15346 / NCIMB 9279 / VKM B-1422 / R1).